We begin with the raw amino-acid sequence, 455 residues long: MTVDTIFAPATARGRAGVAIVRLSGPRAATALTLLAGRLPEARRATRAALRSPPSGPGPTGPGPEEGGEVLDDALVLWFPAPASFTGEDVAELHIHGGRAVLAAVLGALGDLPGLRPAEAGEFSRRAFLNGRLDLTAAEALADLVDAETQAQRRQALRQADGALVRLYEGWRKTGIGLLAHLEAVLDFPDEDLPPEVETAVRGGIGALADALAGHLDDRHRGERLRDGLQVAVVGAPNVGKSSLVNRLARREAAIVSDIAGTTRDIVEVALDLGGYPLVVADTAGLRETSDGIEAEGVRRARARLAAADLTLAVSDGTVENGADDPAADLTGEAVLRVVTKRDLLDPRAVERWLARGALPVSTLTGEGLDALEAALESRARAFFEGDGTPALTRQRHRSALMEARAALRRAAEAPLAELVAEDLRLALRAIGRITGRVTVDDVLDVIFRDFCIGK.

Position 22 (arginine 22) interacts with (6S)-5-formyl-5,6,7,8-tetrahydrofolate. The segment at 43-67 (RRATRAALRSPPSGPGPTGPGPEEG) is disordered. Positions 92 and 132 each coordinate (6S)-5-formyl-5,6,7,8-tetrahydrofolate. The TrmE-type G domain occupies 228 to 381 (GLQVAVVGAP…LEAALESRAR (154 aa)). Asparagine 238 serves as a coordination point for K(+). Residues 238 to 243 (NVGKSS), 257 to 263 (SDIAGTT), and 282 to 285 (DTAG) contribute to the GTP site. Serine 242 contacts Mg(2+). Positions 257, 259, and 262 each coordinate K(+). Mg(2+) is bound at residue threonine 263. Lysine 455 is a binding site for (6S)-5-formyl-5,6,7,8-tetrahydrofolate.

It belongs to the TRAFAC class TrmE-Era-EngA-EngB-Septin-like GTPase superfamily. TrmE GTPase family. Homodimer. Heterotetramer of two MnmE and two MnmG subunits. It depends on K(+) as a cofactor.

Its subcellular location is the cytoplasm. Its function is as follows. Exhibits a very high intrinsic GTPase hydrolysis rate. Involved in the addition of a carboxymethylaminomethyl (cmnm) group at the wobble position (U34) of certain tRNAs, forming tRNA-cmnm(5)s(2)U34. The sequence is that of tRNA modification GTPase MnmE from Rhodospirillum rubrum (strain ATCC 11170 / ATH 1.1.1 / DSM 467 / LMG 4362 / NCIMB 8255 / S1).